Here is a 404-residue protein sequence, read N- to C-terminus: Phosphopentomutase (404 aa).

Residues Asp-10, Asp-303, His-308, Asp-344, His-345, and His-356 each coordinate Mn(2+).

Belongs to the phosphopentomutase family. The cofactor is Mn(2+).

It is found in the cytoplasm. It catalyses the reaction 2-deoxy-alpha-D-ribose 1-phosphate = 2-deoxy-D-ribose 5-phosphate. The enzyme catalyses alpha-D-ribose 1-phosphate = D-ribose 5-phosphate. Its pathway is carbohydrate degradation; 2-deoxy-D-ribose 1-phosphate degradation; D-glyceraldehyde 3-phosphate and acetaldehyde from 2-deoxy-alpha-D-ribose 1-phosphate: step 1/2. Isomerase that catalyzes the conversion of deoxy-ribose 1-phosphate (dRib-1-P) and ribose 1-phosphate (Rib-1-P) to deoxy-ribose 5-phosphate (dRib-5-P) and ribose 5-phosphate (Rib-5-P), respectively. The polypeptide is Phosphopentomutase (Shewanella putrefaciens (strain CN-32 / ATCC BAA-453)).